Here is a 241-residue protein sequence, read N- to C-terminus: Small ribosomal subunit protein uS3 (241 aa).

The KH type-2 domain occupies Ile39–Ser109. The interval Glu215–Glu241 is disordered. The segment covering Gln232–Glu241 has biased composition (basic and acidic residues).

The protein belongs to the universal ribosomal protein uS3 family. In terms of assembly, part of the 30S ribosomal subunit. Forms a tight complex with proteins S10 and S14.

Binds the lower part of the 30S subunit head. Binds mRNA in the 70S ribosome, positioning it for translation. This Crocosphaera subtropica (strain ATCC 51142 / BH68) (Cyanothece sp. (strain ATCC 51142)) protein is Small ribosomal subunit protein uS3.